The following is a 236-amino-acid chain: 1-(5-phosphoribosyl)-5-[(5-phosphoribosylamino)methylideneamino] imidazole-4-carboxamide isomerase (236 aa).

Aspartate 8 (proton acceptor) is an active-site residue. The active-site Proton donor is aspartate 129.

This sequence belongs to the HisA/HisF family.

Its subcellular location is the cytoplasm. The catalysed reaction is 1-(5-phospho-beta-D-ribosyl)-5-[(5-phospho-beta-D-ribosylamino)methylideneamino]imidazole-4-carboxamide = 5-[(5-phospho-1-deoxy-D-ribulos-1-ylimino)methylamino]-1-(5-phospho-beta-D-ribosyl)imidazole-4-carboxamide. The protein operates within amino-acid biosynthesis; L-histidine biosynthesis; L-histidine from 5-phospho-alpha-D-ribose 1-diphosphate: step 4/9. This chain is 1-(5-phosphoribosyl)-5-[(5-phosphoribosylamino)methylideneamino] imidazole-4-carboxamide isomerase, found in Methanosphaerula palustris (strain ATCC BAA-1556 / DSM 19958 / E1-9c).